Consider the following 525-residue polypeptide: GMP synthase [glutamine-hydrolyzing] (525 aa).

The 199-residue stretch at 9–207 (RILILDFGSQ…VRDICQCEAL (199 aa)) folds into the Glutamine amidotransferase type-1 domain. The active-site Nucleophile is the C86. Catalysis depends on residues H181 and E183. One can recognise a GMPS ATP-PPase domain in the interval 208–400 (WTPAKIIDDA…LGLPYDMLYR (193 aa)). 235-241 (SGGVDSS) is an ATP binding site.

Homodimer.

It catalyses the reaction XMP + L-glutamine + ATP + H2O = GMP + L-glutamate + AMP + diphosphate + 2 H(+). It functions in the pathway purine metabolism; GMP biosynthesis; GMP from XMP (L-Gln route): step 1/1. Functionally, catalyzes the synthesis of GMP from XMP. This is GMP synthase [glutamine-hydrolyzing] from Escherichia coli O127:H6 (strain E2348/69 / EPEC).